Here is a 192-residue protein sequence, read N- to C-terminus: 7-methyl-GTP pyrophosphatase (192 aa).

D69 (proton acceptor) is an active-site residue.

The protein belongs to the Maf family. YceF subfamily. It depends on a divalent metal cation as a cofactor.

Its subcellular location is the cytoplasm. It carries out the reaction N(7)-methyl-GTP + H2O = N(7)-methyl-GMP + diphosphate + H(+). In terms of biological role, nucleoside triphosphate pyrophosphatase that hydrolyzes 7-methyl-GTP (m(7)GTP). May have a dual role in cell division arrest and in preventing the incorporation of modified nucleotides into cellular nucleic acids. The chain is 7-methyl-GTP pyrophosphatase from Pseudomonas savastanoi pv. phaseolicola (strain 1448A / Race 6) (Pseudomonas syringae pv. phaseolicola (strain 1448A / Race 6)).